A 119-amino-acid chain; its full sequence is Ribonuclease P protein component (119 aa).

Belongs to the RnpA family. In terms of assembly, consists of a catalytic RNA component (M1 or rnpB) and a protein subunit.

The catalysed reaction is Endonucleolytic cleavage of RNA, removing 5'-extranucleotides from tRNA precursor.. In terms of biological role, RNaseP catalyzes the removal of the 5'-leader sequence from pre-tRNA to produce the mature 5'-terminus. It can also cleave other RNA substrates such as 4.5S RNA. The protein component plays an auxiliary but essential role in vivo by binding to the 5'-leader sequence and broadening the substrate specificity of the ribozyme. This is Ribonuclease P protein component from Serratia proteamaculans (strain 568).